The following is an 821-amino-acid chain: YFSHRPKEKVRTDSNNENSVPKDFENVDNSNFAPRTQKQKHQPELAKKPLSRQKERLQRKLGAQDKGQGQSVLGKGPKEVLPPREKAPGNSSQGKDLSRHSHSRKSGGGGSPETKSDQVPKCDISGKEAISALTRAKSKHCRQEIAETYCRHKLGLLMPEKVARFCPLEGKANKNVQWDEDAVEYMPPNPVRIAFVLVVHGRASRQLQRMFKAIYHKDHFYYIHVDKRSNYLHRQVLQFSRQYDNVRVTSWRMATIWGGASLLSTYLQSMRDLLEMTDWPWDFFINLSAADYPIRTNDQLVAFLSRYRDMNFLKSHGRDNARFIRKQDLDRLFLECDTHMWRLGDRRIPEGIAVDGGSDWFLLNRKFVEYVAFSTDDLVTKMKQFYSYTLLPAESFFHTVLENSPHCDTMVDNNLRITNWNRKLGCKCQYKHIVDWCGCSPNDFKPQDFHRFQQTARPTFFARKFEAIVNQEIIGQLDSYLYGNYPAGTPGLRSYWENVYDEPDGIQSLSDVALTMYHSFIRLGLRRAESSLHTDGENSCRYYPMGHPASVHLYFLADRFQGFLIKHHVTNLAVSKLETLETWMMPKKVFKVASPPSDFGRLQFSEVGTDWDAKERLFRNFGGLLGPMDEPVGMQKWGKGPNVTVTVIWVDPVNVIAATYDILIESTAEFTHYKPPLNLPLRPGVWTVKILHHWVPVAETKFLVAPLTFSNKQPIKPEEALKLHNGPPRSAYMEQSFQSLNPVLSLHINPAQVEQARKNAAFTGTALEAWLVGGTWTAMDVCATGPTACPVMQTCSQTAWSSFSPDPKSELGAVKPDGRLR.

The interval 1–121 (YFSHRPKEKV…PETKSDQVPK (121 aa)) is disordered. Residues 1–821 (YFSHRPKEKV…GAVKPDGRLR (821 aa)) lie on the Lumenal side of the membrane. Basic and acidic residues predominate over residues 9 to 25 (KVRTDSNNENSVPKDFE). A compositionally biased stretch (polar residues) spans 27–36 (VDNSNFAPRT). 2 stretches are compositionally biased toward basic and acidic residues: residues 41 to 58 (HQPELAKKPLSRQKERLQ) and 76 to 87 (GPKEVLPPREKA). An N-linked (GlcNAc...) asparagine glycan is attached at N90. 4 disulfides stabilise this stretch: C122-C150, C166-C407, C426-C439, and C428-C437. UDP-alpha-D-xylose contacts are provided by residues V198, D226, and 255-257 (TIW). Residue N286 is glycosylated (N-linked (GlcNAc...) asparagine). 359–360 (DW) serves as a coordination point for UDP-alpha-D-xylose. Residues S440 and 463–464 (RK) each bind UDP-alpha-D-xylose. Intrachain disulfides connect C540-C789 and C782-C795. N-linked (GlcNAc...) asparagine glycosylation occurs at N642. A disordered region spans residues 801–821 (SSFSPDPKSELGAVKPDGRLR).

This sequence belongs to the glycosyltransferase 14 family. XylT subfamily. Monomer. Requires a divalent metal cation as cofactor. In terms of processing, contains 7 disulfide bonds. N-glycosylated.

It localises to the golgi apparatus membrane. The enzyme catalyses UDP-alpha-D-xylose + L-seryl-[protein] = 3-O-(beta-D-xylosyl)-L-seryl-[protein] + UDP + H(+). It participates in glycan metabolism; chondroitin sulfate biosynthesis. It functions in the pathway glycan metabolism; heparan sulfate biosynthesis. In terms of biological role, catalyzes the first step in the biosynthesis of chondroitin sulfate and dermatan sulfate proteoglycans, such as DCN. Transfers D-xylose from UDP-D-xylose to specific serine residues of the core protein. Required for normal maturation of chondrocytes during bone development, normal onset of ossification and normal embryonic and postnatal skeleton development, especially of the long bones. The chain is Xylosyltransferase 1 (Xylt1) from Rattus norvegicus (Rat).